The primary structure comprises 89 residues: Co-chaperonin GroES (89 aa).

Belongs to the GroES chaperonin family. In terms of assembly, heptamer of 7 subunits arranged in a ring. Interacts with the chaperonin GroEL.

It is found in the cytoplasm. Together with the chaperonin GroEL, plays an essential role in assisting protein folding. The GroEL-GroES system forms a nano-cage that allows encapsulation of the non-native substrate proteins and provides a physical environment optimized to promote and accelerate protein folding. GroES binds to the apical surface of the GroEL ring, thereby capping the opening of the GroEL channel. This chain is Co-chaperonin GroES, found in Fervidobacterium nodosum (strain ATCC 35602 / DSM 5306 / Rt17-B1).